The chain runs to 102 residues: uncharacterized protein (102 aa).

2 helical membrane-spanning segments follow: residues 38–58 and 64–84; these read FYVW…QLIL and VLFL…LFQF.

It is found in the membrane. This is an uncharacterized protein from Saccharomyces cerevisiae (strain ATCC 204508 / S288c) (Baker's yeast).